The chain runs to 274 residues: Large ribosomal subunit protein uL2 (274 aa).

The tract at residues 223–274 (GIAMNPVDHPHGGGEGRSKGNHPVTPWGMPTKGYKTRKKKQSDKYIISRRKK) is disordered. Positions 230 to 240 (DHPHGGGEGRS) are enriched in basic and acidic residues. Residues 256–274 (YKTRKKKQSDKYIISRRKK) are compositionally biased toward basic residues.

This sequence belongs to the universal ribosomal protein uL2 family. Part of the 50S ribosomal subunit. Forms a bridge to the 30S subunit in the 70S ribosome.

In terms of biological role, one of the primary rRNA binding proteins. Required for association of the 30S and 50S subunits to form the 70S ribosome, for tRNA binding and peptide bond formation. It has been suggested to have peptidyltransferase activity; this is somewhat controversial. Makes several contacts with the 16S rRNA in the 70S ribosome. This Nautilia profundicola (strain ATCC BAA-1463 / DSM 18972 / AmH) protein is Large ribosomal subunit protein uL2.